The following is a 251-amino-acid chain: Flap endonuclease Xni (251 aa).

Mg(2+) is bound at residue D104. The 5'-3' exonuclease domain maps to 160–249 (VTPEQLADYW…LDGNLQQLRL (90 aa)). 5 residues coordinate K(+): L171, A172, P180, V182, and I185. An interaction with DNA region spans residues 184–189 (GIGPKS).

Belongs to the Xni family. It depends on Mg(2+) as a cofactor. K(+) is required as a cofactor.

Functionally, has flap endonuclease activity. During DNA replication, flap endonucleases cleave the 5'-overhanging flap structure that is generated by displacement synthesis when DNA polymerase encounters the 5'-end of a downstream Okazaki fragment. The protein is Flap endonuclease Xni of Klebsiella pneumoniae subsp. pneumoniae (strain ATCC 700721 / MGH 78578).